Reading from the N-terminus, the 931-residue chain is Phosphoenolpyruvate carboxylase (931 aa).

Catalysis depends on residues His-138 and Lys-594.

It belongs to the PEPCase type 1 family. Mg(2+) serves as cofactor.

The catalysed reaction is oxaloacetate + phosphate = phosphoenolpyruvate + hydrogencarbonate. Its function is as follows. Forms oxaloacetate, a four-carbon dicarboxylic acid source for the tricarboxylic acid cycle. The polypeptide is Phosphoenolpyruvate carboxylase (Streptococcus agalactiae serotype III (strain NEM316)).